A 251-amino-acid chain; its full sequence is Imidazole glycerol phosphate synthase subunit HisF (251 aa).

Residues D11 and D130 contribute to the active site.

Belongs to the HisA/HisF family. In terms of assembly, heterodimer of HisH and HisF.

It localises to the cytoplasm. It carries out the reaction 5-[(5-phospho-1-deoxy-D-ribulos-1-ylimino)methylamino]-1-(5-phospho-beta-D-ribosyl)imidazole-4-carboxamide + L-glutamine = D-erythro-1-(imidazol-4-yl)glycerol 3-phosphate + 5-amino-1-(5-phospho-beta-D-ribosyl)imidazole-4-carboxamide + L-glutamate + H(+). It functions in the pathway amino-acid biosynthesis; L-histidine biosynthesis; L-histidine from 5-phospho-alpha-D-ribose 1-diphosphate: step 5/9. Functionally, IGPS catalyzes the conversion of PRFAR and glutamine to IGP, AICAR and glutamate. The HisF subunit catalyzes the cyclization activity that produces IGP and AICAR from PRFAR using the ammonia provided by the HisH subunit. In Chlorobium chlorochromatii (strain CaD3), this protein is Imidazole glycerol phosphate synthase subunit HisF.